Consider the following 216-residue polypeptide: Adenylate kinase (216 aa).

An ATP-binding site is contributed by 10–15 (GAGKGT). The NMP stretch occupies residues 30–59 (STGDIFRKNISNKTPLGMEAKSYMDKGQLV). AMP is bound by residues Thr31, Arg36, 57–59 (QLV), 85–88 (GFPR), and Gln92. The interval 126 to 163 (GRRVCGECGASYHIKFITPKTEGVCDLCGGKLVQRKDD) is LID. Arg127 contacts ATP. Cys130 and Cys133 together coordinate Zn(2+). 136–137 (SY) is a binding site for ATP. Cys150 and Cys153 together coordinate Zn(2+). AMP contacts are provided by Arg160 and Arg171. Residue Lys199 coordinates ATP.

Belongs to the adenylate kinase family. Monomer.

The protein localises to the cytoplasm. The enzyme catalyses AMP + ATP = 2 ADP. It functions in the pathway purine metabolism; AMP biosynthesis via salvage pathway; AMP from ADP: step 1/1. Functionally, catalyzes the reversible transfer of the terminal phosphate group between ATP and AMP. Plays an important role in cellular energy homeostasis and in adenine nucleotide metabolism. The sequence is that of Adenylate kinase from Clostridium tetani (strain Massachusetts / E88).